Consider the following 68-residue polypeptide: UPF0253 protein AHA_2115 (68 aa).

Belongs to the UPF0253 family.

The protein is UPF0253 protein AHA_2115 of Aeromonas hydrophila subsp. hydrophila (strain ATCC 7966 / DSM 30187 / BCRC 13018 / CCUG 14551 / JCM 1027 / KCTC 2358 / NCIMB 9240 / NCTC 8049).